The primary structure comprises 408 residues: Probable cysteine desulfurase (408 aa).

Residue lysine 225 is modified to N6-(pyridoxal phosphate)lysine.

It belongs to the class-V pyridoxal-phosphate-dependent aminotransferase family. Csd subfamily. The cofactor is pyridoxal 5'-phosphate.

It catalyses the reaction (sulfur carrier)-H + L-cysteine = (sulfur carrier)-SH + L-alanine. Functionally, catalyzes the removal of elemental sulfur and selenium atoms from L-cysteine, L-cystine, L-selenocysteine, and L-selenocystine to produce L-alanine. This is Probable cysteine desulfurase (csd) from Mycoplasma pneumoniae (strain ATCC 29342 / M129 / Subtype 1) (Mycoplasmoides pneumoniae).